Consider the following 256-residue polypeptide: Hydroxyacylglutathione hydrolase (256 aa).

Positions 53, 55, 57, 58, 113, 130, and 168 each coordinate Zn(2+).

Belongs to the metallo-beta-lactamase superfamily. Glyoxalase II family. In terms of assembly, monomer. Zn(2+) serves as cofactor.

The enzyme catalyses an S-(2-hydroxyacyl)glutathione + H2O = a 2-hydroxy carboxylate + glutathione + H(+). It functions in the pathway secondary metabolite metabolism; methylglyoxal degradation; (R)-lactate from methylglyoxal: step 2/2. Thiolesterase that catalyzes the hydrolysis of S-D-lactoyl-glutathione to form glutathione and D-lactic acid. In Tolumonas auensis (strain DSM 9187 / NBRC 110442 / TA 4), this protein is Hydroxyacylglutathione hydrolase.